The primary structure comprises 334 residues: Holliday junction branch migration complex subunit RuvB (334 aa).

Residues 4-184 form a large ATPase domain (RuvB-L) region; the sequence is ADRIISASPK…FGIVQRLEFY (181 aa). Residues isoleucine 23, arginine 24, glycine 65, lysine 68, threonine 69, threonine 70, 131-133, arginine 174, tyrosine 184, and arginine 221 each bind ATP; that span reads EDY. A Mg(2+)-binding site is contributed by threonine 69. Residues 185-255 form a small ATPAse domain (RuvB-S) region; that stretch reads SVDDLTSIVK…IAKQALAMLD (71 aa). Residues 258-334 form a head domain (RuvB-H) region; that stretch reads SEGFDFMDIK…YAHLGIAKLD (77 aa). DNA-binding residues include arginine 294, arginine 313, and arginine 318.

It belongs to the RuvB family. As to quaternary structure, homohexamer. Forms an RuvA(8)-RuvB(12)-Holliday junction (HJ) complex. HJ DNA is sandwiched between 2 RuvA tetramers; dsDNA enters through RuvA and exits via RuvB. An RuvB hexamer assembles on each DNA strand where it exits the tetramer. Each RuvB hexamer is contacted by two RuvA subunits (via domain III) on 2 adjacent RuvB subunits; this complex drives branch migration. In the full resolvosome a probable DNA-RuvA(4)-RuvB(12)-RuvC(2) complex forms which resolves the HJ.

The protein localises to the cytoplasm. It carries out the reaction ATP + H2O = ADP + phosphate + H(+). Its function is as follows. The RuvA-RuvB-RuvC complex processes Holliday junction (HJ) DNA during genetic recombination and DNA repair, while the RuvA-RuvB complex plays an important role in the rescue of blocked DNA replication forks via replication fork reversal (RFR). RuvA specifically binds to HJ cruciform DNA, conferring on it an open structure. The RuvB hexamer acts as an ATP-dependent pump, pulling dsDNA into and through the RuvAB complex. RuvB forms 2 homohexamers on either side of HJ DNA bound by 1 or 2 RuvA tetramers; 4 subunits per hexamer contact DNA at a time. Coordinated motions by a converter formed by DNA-disengaged RuvB subunits stimulates ATP hydrolysis and nucleotide exchange. Immobilization of the converter enables RuvB to convert the ATP-contained energy into a lever motion, pulling 2 nucleotides of DNA out of the RuvA tetramer per ATP hydrolyzed, thus driving DNA branch migration. The RuvB motors rotate together with the DNA substrate, which together with the progressing nucleotide cycle form the mechanistic basis for DNA recombination by continuous HJ branch migration. Branch migration allows RuvC to scan DNA until it finds its consensus sequence, where it cleaves and resolves cruciform DNA. In Actinobacillus pleuropneumoniae serotype 5b (strain L20), this protein is Holliday junction branch migration complex subunit RuvB.